The sequence spans 305 residues: Probable cell division protein WhiA (305 aa).

A DNA-binding region (H-T-H motif) is located at residues 269-302 (TIKELGELLEPSLGKSGVNHRLRKLVEQANELRK).

The protein belongs to the WhiA family.

Its function is as follows. Involved in cell division and chromosome segregation. This is Probable cell division protein WhiA from Lactococcus lactis subsp. lactis (strain IL1403) (Streptococcus lactis).